The chain runs to 325 residues: tRNA U34 carboxymethyltransferase (325 aa).

Carboxy-S-adenosyl-L-methionine is bound by residues K91, W105, K110, G130, 152 to 154, M196, Y200, and R315; that span reads DPS.

Belongs to the class I-like SAM-binding methyltransferase superfamily. CmoB family. Homotetramer.

The catalysed reaction is carboxy-S-adenosyl-L-methionine + 5-hydroxyuridine(34) in tRNA = 5-carboxymethoxyuridine(34) in tRNA + S-adenosyl-L-homocysteine + H(+). Its function is as follows. Catalyzes carboxymethyl transfer from carboxy-S-adenosyl-L-methionine (Cx-SAM) to 5-hydroxyuridine (ho5U) to form 5-carboxymethoxyuridine (cmo5U) at position 34 in tRNAs. The chain is tRNA U34 carboxymethyltransferase from Aeromonas hydrophila subsp. hydrophila (strain ATCC 7966 / DSM 30187 / BCRC 13018 / CCUG 14551 / JCM 1027 / KCTC 2358 / NCIMB 9240 / NCTC 8049).